The following is a 324-amino-acid chain: DNA repair and recombination protein RadA (324 aa).

114–121 (GEFGSGKT) is a binding site for ATP.

It belongs to the eukaryotic RecA-like protein family.

Its function is as follows. Involved in DNA repair and in homologous recombination. Binds and assemble on single-stranded DNA to form a nucleoprotein filament. Hydrolyzes ATP in a ssDNA-dependent manner and promotes DNA strand exchange between homologous DNA molecules. The polypeptide is DNA repair and recombination protein RadA (Sulfurisphaera tokodaii (strain DSM 16993 / JCM 10545 / NBRC 100140 / 7) (Sulfolobus tokodaii)).